A 418-amino-acid polypeptide reads, in one-letter code: Nuclear hormone receptor family member nhr-209 (418 aa).

The nuclear receptor DNA-binding region spans 43 to 121; that stretch reads PEKCAVCKNA…VGMDSTAIRA (79 aa). 2 NR C4-type zinc fingers span residues 46–66 and 82–104; these read CAVCKNAAIGYHYNVPSCNGC and CMNHKNCLDEIESDESQRLCKGC. The NR LBD domain maps to 174–414; the sequence is TIPDGFEDMR…SHPPKSLFDE (241 aa). Positions 403–414 are AF-2; it reads ECSHPPKSLFDE.

The protein belongs to the nuclear hormone receptor family.

The protein localises to the nucleus. In terms of biological role, transcriptional regulator. Plays a role in modulation of lifespan and immunity. This Caenorhabditis elegans protein is Nuclear hormone receptor family member nhr-209.